The chain runs to 202 residues: Imidazoleglycerol-phosphate dehydratase (202 aa).

It belongs to the imidazoleglycerol-phosphate dehydratase family.

The protein resides in the cytoplasm. It catalyses the reaction D-erythro-1-(imidazol-4-yl)glycerol 3-phosphate = 3-(imidazol-4-yl)-2-oxopropyl phosphate + H2O. The protein operates within amino-acid biosynthesis; L-histidine biosynthesis; L-histidine from 5-phospho-alpha-D-ribose 1-diphosphate: step 6/9. The polypeptide is Imidazoleglycerol-phosphate dehydratase (Corynebacterium efficiens (strain DSM 44549 / YS-314 / AJ 12310 / JCM 11189 / NBRC 100395)).